Consider the following 1389-residue polypeptide: DNA-directed RNA polymerase subunit beta (1389 aa).

It belongs to the RNA polymerase beta chain family. As to quaternary structure, in plastids the minimal PEP RNA polymerase catalytic core is composed of four subunits: alpha, beta, beta', and beta''. When a (nuclear-encoded) sigma factor is associated with the core the holoenzyme is formed, which can initiate transcription.

It is found in the plastid. It localises to the chloroplast. The enzyme catalyses RNA(n) + a ribonucleoside 5'-triphosphate = RNA(n+1) + diphosphate. Its function is as follows. DNA-dependent RNA polymerase catalyzes the transcription of DNA into RNA using the four ribonucleoside triphosphates as substrates. This is DNA-directed RNA polymerase subunit beta from Phaeodactylum tricornutum (strain CCAP 1055/1).